The following is a 622-amino-acid chain: Fanconi anemia group G protein (622 aa).

Phosphoserine is present on S7. TPR repeat units follow at residues 246–279 (VQVY…GSAW), 344–377 (SQTK…LLDS), 453–486 (SATH…LFRA), and 514–547 (AAAL…CPGN).

In terms of assembly, belongs to the multisubunit FA complex composed of FANCA, FANCB, FANCC, FANCE, FANCF, FANCG, FANCL/PHF9 and FANCM. The complex is not found in FA patients. In complex with FANCF, FANCA and FANCL, but not with FANCC, nor FANCE, interacts with HES1; this interaction may be essential for the stability and nuclear localization of FA core complex proteins. The complex with FANCC and FANCG may also include EIF2AK2 and HSP70. When phosphorylated at Ser-7, forms a complex with BRCA2, FANCD2 and XRCC3. Highly expressed in testis and thymus. Found in lymphoblasts.

The protein localises to the nucleus. It localises to the cytoplasm. Functionally, DNA repair protein that may operate in a postreplication repair or a cell cycle checkpoint function. May be implicated in interstrand DNA cross-link repair and in the maintenance of normal chromosome stability. Candidate tumor suppressor gene. The chain is Fanconi anemia group G protein (FANCG) from Homo sapiens (Human).